A 298-amino-acid polypeptide reads, in one-letter code: Ethanolamine ammonia-lyase small subunit (298 aa).

The tract at residues 15-43 (ASMGQDVPQPVAPSTQEGAKPQRAAPTAT) is disordered. Residues V210, E231, and C261 each coordinate adenosylcob(III)alamin.

It belongs to the EutC family. As to quaternary structure, the basic unit is a heterodimer which dimerizes to form tetramers. The heterotetramers trimerize; 6 large subunits form a core ring with 6 small subunits projecting outwards. It depends on adenosylcob(III)alamin as a cofactor.

It localises to the bacterial microcompartment. The enzyme catalyses ethanolamine = acetaldehyde + NH4(+). It participates in amine and polyamine degradation; ethanolamine degradation. Catalyzes the deamination of various vicinal amino-alcohols to oxo compounds. Allows this organism to utilize ethanolamine as the sole source of nitrogen and carbon in the presence of external vitamin B12. The polypeptide is Ethanolamine ammonia-lyase small subunit (Salmonella arizonae (strain ATCC BAA-731 / CDC346-86 / RSK2980)).